Reading from the N-terminus, the 167-residue chain is MFPMVTGFMNYGQQTVRAARYIGQSLIITLSHSNRFPVTIQYPYEKLMTSERFRGRIHFEFDKCIACEVCVRVCPIDLPVVDWKFERDIRKKRLLNYSIDFGICIFCGNCVEYCPTNCLSMTEEYELSTYDRHELNYNQTALGRLPMPVIDDYTIRTIFNLPKIKSK.

4Fe-4S ferredoxin-type domains follow at residues 55–84 (GRIH…VDWK) and 95–124 (LNYS…MTEE). [4Fe-4S] cluster contacts are provided by Cys-64, Cys-67, Cys-70, Cys-74, Cys-104, Cys-107, Cys-110, and Cys-114.

Belongs to the complex I 23 kDa subunit family. NDH is composed of at least 16 different subunits, 5 of which are encoded in the nucleus. The cofactor is [4Fe-4S] cluster.

It localises to the plastid. It is found in the chloroplast thylakoid membrane. The catalysed reaction is a plastoquinone + NADH + (n+1) H(+)(in) = a plastoquinol + NAD(+) + n H(+)(out). The enzyme catalyses a plastoquinone + NADPH + (n+1) H(+)(in) = a plastoquinol + NADP(+) + n H(+)(out). NDH shuttles electrons from NAD(P)H:plastoquinone, via FMN and iron-sulfur (Fe-S) centers, to quinones in the photosynthetic chain and possibly in a chloroplast respiratory chain. The immediate electron acceptor for the enzyme in this species is believed to be plastoquinone. Couples the redox reaction to proton translocation, and thus conserves the redox energy in a proton gradient. This chain is NAD(P)H-quinone oxidoreductase subunit I, chloroplastic, found in Pelargonium hortorum (Common geranium).